Consider the following 460-residue polypeptide: Chromosomal replication initiator protein DnaA (460 aa).

The interval 1 to 91 is domain I, interacts with DnaA modulators; it reads MSLINPKVSA…LLWQNEDKSI (91 aa). Residues 91–122 form a domain II region; the sequence is ICSIDIQVTEEKNSSSSIISKNKEESVNNLGS. Positions 123-342 are domain III, AAA+ region; the sequence is PLDPRFTFDN…GALNKVAHTS (220 aa). Residues G169, G171, K172, and T173 each coordinate ATP. The interval 343–460 is domain IV, binds dsDNA; sequence LIGRSMTVES…EINQLRKMFK (118 aa).

Belongs to the DnaA family. As to quaternary structure, oligomerizes as a right-handed, spiral filament on DNA at oriC.

The protein resides in the cytoplasm. Plays an essential role in the initiation and regulation of chromosomal replication. ATP-DnaA binds to the origin of replication (oriC) to initiate formation of the DNA replication initiation complex once per cell cycle. Binds the DnaA box (a 9 base pair repeat at the origin) and separates the double-stranded (ds)DNA. Forms a right-handed helical filament on oriC DNA; dsDNA binds to the exterior of the filament while single-stranded (ss)DNA is stabiized in the filament's interior. The ATP-DnaA-oriC complex binds and stabilizes one strand of the AT-rich DNA unwinding element (DUE), permitting loading of DNA polymerase. After initiation quickly degrades to an ADP-DnaA complex that is not apt for DNA replication. Binds acidic phospholipids. This is Chromosomal replication initiator protein DnaA from Wolbachia sp. subsp. Brugia malayi (strain TRS).